The primary structure comprises 161 residues: uncharacterized protein (161 aa).

This is an uncharacterized protein from Saccharomyces cerevisiae (strain ATCC 204508 / S288c) (Baker's yeast).